The following is a 304-amino-acid chain: Protoheme IX farnesyltransferase (304 aa).

7 consecutive transmembrane segments (helical) span residues 24–44 (VMTL…GTIH), 45–65 (PVIA…AAAL), 107–127 (VFVM…FSIF), 145–165 (IVIG…AVTG), 172–192 (VLLF…LALF), 234–254 (WIGG…LVFV), and 277–297 (LFGY…GDRL).

It belongs to the UbiA prenyltransferase family. Protoheme IX farnesyltransferase subfamily.

The protein localises to the cell inner membrane. The catalysed reaction is heme b + (2E,6E)-farnesyl diphosphate + H2O = Fe(II)-heme o + diphosphate. It functions in the pathway porphyrin-containing compound metabolism; heme O biosynthesis; heme O from protoheme: step 1/1. Functionally, converts heme B (protoheme IX) to heme O by substitution of the vinyl group on carbon 2 of heme B porphyrin ring with a hydroxyethyl farnesyl side group. The polypeptide is Protoheme IX farnesyltransferase (Novosphingobium aromaticivorans (strain ATCC 700278 / DSM 12444 / CCUG 56034 / CIP 105152 / NBRC 16084 / F199)).